The following is a 372-amino-acid chain: Alanine dehydrogenase 2 (372 aa).

Histidine 95 is a catalytic residue. An NAD(+)-binding site is contributed by 169-199 (KVTIIGGGQAGTNAAKIALGLGADVTILDVN).

Belongs to the AlaDH/PNT family.

The catalysed reaction is L-alanine + NAD(+) + H2O = pyruvate + NH4(+) + NADH + H(+). It functions in the pathway amino-acid degradation; L-alanine degradation via dehydrogenase pathway; NH(3) and pyruvate from L-alanine: step 1/1. Functionally, may play a role in cell wall synthesis as L-alanine is an important constituent of the peptidoglycan layer. The sequence is that of Alanine dehydrogenase 2 (ald2) from Staphylococcus aureus (strain COL).